We begin with the raw amino-acid sequence, 507 residues long: Probable circularly permuted 1,3-beta-glucanase P23A10.11c YJL171C (507 aa).

Residues 1–22 (MIAKSFIASFLFLCFAFSGVKA) form the signal peptide. A compositionally biased stretch (low complexity) spans 228 to 264 (AAPPDSASESTPASTSYASSTTSATSTSTTSGSSGSS). A disordered region spans residues 228–266 (AAPPDSASESTPASTSYASSTTSATSTSTTSGSSGSSDW). The ExDxxE motif signature appears at 412-417 (EFDIFE). A glycan (N-linked (GlcNAc...) asparagine) is linked at asparagine 480.

The protein belongs to the PGA52 family.

It is found in the secreted. It catalyses the reaction Hydrolysis of (1-&gt;3)-beta-D-glucosidic linkages in (1-&gt;3)-beta-D-glucans.. Functionally, probable circularly permuted 1,3-beta-glucanase involved in cell wall modification through beta-1,3-glucan network alterations such as increased branching or remodeling. The chain is Probable circularly permuted 1,3-beta-glucanase P23A10.11c YJL171C from Schizosaccharomyces pombe (strain 972 / ATCC 24843) (Fission yeast).